Here is a 358-residue protein sequence, read N- to C-terminus: Dynein axonemal assembly factor 10 (358 aa).

6 WD repeats span residues 64 to 106 (EKSK…SPVY), 116 to 155 (NAID…TPVV), 163 to 206 (ETKR…LRWE), 208 to 250 (NIRN…PSKG), 258 to 298 (AHKS…QRSK), and 320 to 358 (LSTQ…LNTV).

In terms of assembly, interacts with PIH1D1; the interaction associates DNAAF10 with the R2TP complex. Interacts with several dynein axonemal assembly factors.

Its subcellular location is the dynein axonemal particle. Functionally, key assembly factor specifically required for the stability of axonemal dynein heavy chains in cytoplasm. In Danio rerio (Zebrafish), this protein is Dynein axonemal assembly factor 10 (dnaaf10).